Here is a 769-residue protein sequence, read N- to C-terminus: Subtilisin-like protease 3 (769 aa).

N-linked (GlcNAc...) asparagine glycans are attached at residues N68, N102, N108, N295, N316, and N356. The segment covering 293–302 has biased composition (basic residues); that stretch reads KINHSNKHKN. A disordered region spans residues 293–329; that stretch reads KINHSNKHKNNNNNNNNNDYHNNNKSNYHSHSSAKCQ. Residues 303-325 show a composition bias toward low complexity; the sequence is NNNNNNNNDYHNNNKSNYHSHSS. The Peptidase S8 domain maps to 345–756; sequence GYDIIQMEEG…GGFINVYDLV (412 aa). D372 serves as the catalytic Charge relay system. Residues 468-493 are disordered; the sequence is NIKSSDNIKSSDNINSSDNIKSSDNN. N-linked (GlcNAc...) asparagine glycans are attached at residues N482 and N515. The Charge relay system role is filled by H523. 2 N-linked (GlcNAc...) asparagine glycosylation sites follow: N584 and N616. S701 functions as the Charge relay system in the catalytic mechanism. N-linked (GlcNAc...) asparagine glycosylation occurs at N720.

Belongs to the peptidase S8 family.

It localises to the secreted. The enzyme catalyses Hydrolysis of proteins with broad specificity for peptide bonds, and a preference for a large uncharged residue in P1. Hydrolyzes peptide amides.. Functionally, serine protease which may cleave PFN/profilin. This chain is Subtilisin-like protease 3, found in Plasmodium falciparum (isolate 3D7).